The sequence spans 292 residues: ATP phosphoribosyltransferase (292 aa).

This sequence belongs to the ATP phosphoribosyltransferase family. Long subfamily. Mg(2+) is required as a cofactor.

The protein localises to the cytoplasm. The catalysed reaction is 1-(5-phospho-beta-D-ribosyl)-ATP + diphosphate = 5-phospho-alpha-D-ribose 1-diphosphate + ATP. The protein operates within amino-acid biosynthesis; L-histidine biosynthesis; L-histidine from 5-phospho-alpha-D-ribose 1-diphosphate: step 1/9. Feedback inhibited by histidine. Its function is as follows. Catalyzes the condensation of ATP and 5-phosphoribose 1-diphosphate to form N'-(5'-phosphoribosyl)-ATP (PR-ATP). Has a crucial role in the pathway because the rate of histidine biosynthesis seems to be controlled primarily by regulation of HisG enzymatic activity. The sequence is that of ATP phosphoribosyltransferase from Gemmatimonas aurantiaca (strain DSM 14586 / JCM 11422 / NBRC 100505 / T-27).